Reading from the N-terminus, the 79-residue chain is MESLNVDMLYIAVAIMIGLAAIGAAIGIGILGSKFLEGAARQPDLVPLLRTQFFVVMGLVDAIPMIAVGLGLYMLFAIS.

Transmembrane regions (helical) follow at residues 11 to 31 (IAVA…IGIL) and 53 to 73 (FFVV…LGLY).

This sequence belongs to the ATPase C chain family. F-type ATPases have 2 components, F(1) - the catalytic core - and F(0) - the membrane proton channel. F(1) has five subunits: alpha(3), beta(3), gamma(1), delta(1), epsilon(1). F(0) has three main subunits: a(1), b(2) and c(10-14). The alpha and beta chains form an alternating ring which encloses part of the gamma chain. F(1) is attached to F(0) by a central stalk formed by the gamma and epsilon chains, while a peripheral stalk is formed by the delta and b chains.

Its subcellular location is the cell membrane. Its function is as follows. F(1)F(0) ATP synthase produces ATP from ADP in the presence of a proton or sodium gradient. F-type ATPases consist of two structural domains, F(1) containing the extramembraneous catalytic core and F(0) containing the membrane proton channel, linked together by a central stalk and a peripheral stalk. During catalysis, ATP synthesis in the catalytic domain of F(1) is coupled via a rotary mechanism of the central stalk subunits to proton translocation. Key component of the F(0) channel; it plays a direct role in translocation across the membrane. A homomeric c-ring of between 10-14 subunits forms the central stalk rotor element with the F(1) delta and epsilon subunits. This is ATP synthase subunit c from Buchnera aphidicola subsp. Schizaphis graminum (strain Sg).